The following is a 209-amino-acid chain: SelT-like protein (209 aa).

The signal sequence occupies residues 1-22; the sequence is MDKTQLILLGLPIFLLCSDLFN. The cysteines at positions 64 and 67 are disulfide-linked.

It belongs to the SelWTH family. SELT subfamily.

The chain is SelT-like protein from Arabidopsis thaliana (Mouse-ear cress).